The primary structure comprises 272 residues: Granaticin polyketide synthase putative ketoacyl reductase 1 (272 aa).

Residue 21–45 (LVTGATSGIGLAIARRLAALGARTF) participates in NAD(+) binding. S155 contacts substrate. Y168 acts as the Proton acceptor in catalysis.

Belongs to the short-chain dehydrogenases/reductases (SDR) family.

Its pathway is antibiotic biosynthesis; granaticin biosynthesis. The sequence is that of Granaticin polyketide synthase putative ketoacyl reductase 1 (gra-orf5) from Streptomyces violaceoruber.